Here is a 349-residue protein sequence, read N- to C-terminus: Fe(3+) ions import ATP-binding protein FbpC (349 aa).

The region spanning 4–236 (LDFNKIGKSY…PIDEPTATFL (233 aa)) is the ABC transporter domain. Position 36-43 (36-43 (GPSGSGKT)) interacts with ATP.

The protein belongs to the ABC transporter superfamily. Fe(3+) ion importer (TC 3.A.1.10) family. In terms of assembly, the complex is composed of two ATP-binding proteins (FbpC), two transmembrane proteins (FbpB) and a solute-binding protein (FbpA).

It is found in the cell inner membrane. The enzyme catalyses Fe(3+)(out) + ATP + H2O = Fe(3+)(in) + ADP + phosphate + H(+). Functionally, part of the ABC transporter complex FbpABC involved in Fe(3+) ions import. Responsible for energy coupling to the transport system. The protein is Fe(3+) ions import ATP-binding protein FbpC of Yersinia enterocolitica.